We begin with the raw amino-acid sequence, 378 residues long: Flap endonuclease 1 (378 aa).

The interval 1 to 104 (MGVKDLSKVI…SELEKRTERR (104 aa)) is N-domain. Asp-34 lines the Mg(2+) pocket. Arg-47 and Arg-70 together coordinate DNA. Asp-86 provides a ligand contact to Mg(2+). Residues 90 to 113 (PQMKTSELEKRTERRTEAEKQRND) are disordered. Positions 95-113 (SELEKRTERRTEAEKQRND) are enriched in basic and acidic residues. The segment at 122–253 (SVNKFEKRLV…KKAFELIKKY (132 aa)) is I-domain. Residues Glu-158, Glu-160, Asp-179, and Asp-181 each contribute to the Mg(2+) site. DNA is bound at residue Glu-158. Residues Gly-231 and Asp-233 each coordinate DNA. Asp-233 provides a ligand contact to Mg(2+). Positions 336–344 (QQARIDSFF) are interaction with PCNA. Residues 348-378 (KVVTSETTKRKNEEKNNLKKRGPSLGKKAKK) form a disordered region. Residues 354–364 (TTKRKNEEKNN) are compositionally biased toward basic and acidic residues. Over residues 365–378 (LKKRGPSLGKKAKK) the composition is skewed to basic residues.

Belongs to the XPG/RAD2 endonuclease family. FEN1 subfamily. Interacts with PCNA. Three molecules of FEN1 bind to one PCNA trimer with each molecule binding to one PCNA monomer. PCNA stimulates the nuclease activity without altering cleavage specificity. Mg(2+) serves as cofactor. Phosphorylated. Phosphorylation upon DNA damage induces relocalization to the nuclear plasma.

It is found in the nucleus. It localises to the nucleolus. The protein localises to the nucleoplasm. The protein resides in the mitochondrion. Its function is as follows. Structure-specific nuclease with 5'-flap endonuclease and 5'-3' exonuclease activities involved in DNA replication and repair. During DNA replication, cleaves the 5'-overhanging flap structure that is generated by displacement synthesis when DNA polymerase encounters the 5'-end of a downstream Okazaki fragment. It enters the flap from the 5'-end and then tracks to cleave the flap base, leaving a nick for ligation. Also involved in the long patch base excision repair (LP-BER) pathway, by cleaving within the apurinic/apyrimidinic (AP) site-terminated flap. Acts as a genome stabilization factor that prevents flaps from equilibrating into structures that lead to duplications and deletions. Also possesses 5'-3' exonuclease activity on nicked or gapped double-stranded DNA, and exhibits RNase H activity. Also involved in replication and repair of rDNA and in repairing mitochondrial DNA. The polypeptide is Flap endonuclease 1 (Brugia malayi (Filarial nematode worm)).